The primary structure comprises 288 residues: 2-hydroxy-6-oxononadienedioate/2-hydroxy-6-oxononatrienedioate hydrolase (288 aa).

Positions 38–273 (VVLLHGSGPG…DCGHWAQWEH (236 aa)) constitute an AB hydrolase-1 domain. Catalysis depends on His267, which acts as the Proton acceptor.

The protein belongs to the AB hydrolase superfamily. MhpC family. Homodimer.

The catalysed reaction is (2Z,4E)-2-hydroxy-6-oxonona-2,4-dienedioate + H2O = (2Z)-2-hydroxypenta-2,4-dienoate + succinate + H(+). It catalyses the reaction (2Z,4E,7E)-2-hydroxy-6-oxonona-2,4,7-trienedioate + H2O = (2Z)-2-hydroxypenta-2,4-dienoate + fumarate + H(+). Its pathway is aromatic compound metabolism; 3-phenylpropanoate degradation. Its function is as follows. Catalyzes the cleavage of the C5-C6 bond of 2-hydroxy-6-oxononadienedioate and 2-hydroxy-6-oxononatrienedioate, a dienol ring fission product of the bacterial meta-cleavage pathway for degradation of phenylpropionic acid. In Escherichia coli O139:H28 (strain E24377A / ETEC), this protein is 2-hydroxy-6-oxononadienedioate/2-hydroxy-6-oxononatrienedioate hydrolase.